The chain runs to 324 residues: Elongation factor Ts, mitochondrial (324 aa).

Residues 1-44 constitute a mitochondrion transit peptide; that stretch reads MSLLRSLRFFPVACTGRSARAVLLQPSQPWLTFHAGPSLSSAAS. Residues K75, K132, and K191 each carry the N6-succinyllysine modification. The residue at position 269 (S269) is a Phosphoserine.

The protein belongs to the EF-Ts family.

It localises to the mitochondrion. In terms of biological role, associates with the EF-Tu.GDP complex and induces the exchange of GDP to GTP. It remains bound to the aminoacyl-tRNA.EF-Tu.GTP complex up to the GTP hydrolysis stage on the ribosome. The protein is Elongation factor Ts, mitochondrial (Tsfm) of Mus musculus (Mouse).